Here is a 514-residue protein sequence, read N- to C-terminus: MKKLKINYLFIGILTLLLAAALWPSIPWFGKTENHIAAIQARGVLRVSTIDSPLTYSVINGKKYGLDYELAQQFANYLGVKLKVTVRQNISQLFDDLDSGNADLLAAGLVYDSARVKNYQPGPMYYSVSQQLVYRVGQYRPRSLATVNENQLTIAPGHVVVNDLQRLKETKFPDLSWKVDDKKGSTTLLEEVISGKLDYTIADSVAISLFQRVHPELAVALDVTDEQPVTWFSRLDDDNTLSAALLDFFNSINEDGSLARIEEKYLGHGDDFDYVDTRSFLRAVDNVLPELEPLFKKYAKEIDWRLLAAISYQESHWDPLATSPTGVRGLMMLTKNTAQSLGLTDRTDAEQSISGGARYLEDMMAKVPETVPEDERIWFALAAYNMGYAHMLDARSLTVKTKGNPDSWTDVKQRLPLLSQKPYYSKLTYGYARGHEAYAYVENIRKYQISLVGYLQEKEKQEAEAMKLAQDYPAVSPEELNKAPFPFLSFLSQSSGYLTHSPSLLFTPQKKEEK.

The N-terminal stretch at 1 to 30 is a signal peptide; sequence MKKLKINYLFIGILTLLLAAALWPSIPWFG. Residues 31-269 form a non-LT domain region; that stretch reads KTENHIAAIQ…RIEEKYLGHG (239 aa). The LT domain stretch occupies residues 270–514; the sequence is DDFDYVDTRS…LFTPQKKEEK (245 aa). Glu-314 is a catalytic residue.

The protein in the N-terminal section; belongs to the bacterial solute-binding protein 3 family. It in the C-terminal section; belongs to the transglycosylase Slt family.

It is found in the cell outer membrane. The catalysed reaction is Exolytic cleavage of the (1-&gt;4)-beta-glycosidic linkage between N-acetylmuramic acid (MurNAc) and N-acetylglucosamine (GlcNAc) residues in peptidoglycan, from either the reducing or the non-reducing ends of the peptidoglycan chains, with concomitant formation of a 1,6-anhydrobond in the MurNAc residue.. Murein-degrading enzyme that degrades murein glycan strands and insoluble, high-molecular weight murein sacculi, with the concomitant formation of a 1,6-anhydromuramoyl product. Lytic transglycosylases (LTs) play an integral role in the metabolism of the peptidoglycan (PG) sacculus. Their lytic action creates space within the PG sacculus to allow for its expansion as well as for the insertion of various structures such as secretion systems and flagella. This is Membrane-bound lytic murein transglycosylase F from Salmonella paratyphi B (strain ATCC BAA-1250 / SPB7).